Reading from the N-terminus, the 412-residue chain is CCA-adding enzyme (412 aa).

2 residues coordinate ATP: Gly8 and Arg11. Residues Gly8 and Arg11 each coordinate CTP. Mg(2+)-binding residues include Asp21 and Asp23. ATP contacts are provided by Arg91, Arg137, and Arg140. Positions 91, 137, and 140 each coordinate CTP.

It belongs to the tRNA nucleotidyltransferase/poly(A) polymerase family. Bacterial CCA-adding enzyme type 2 subfamily. Requires Mg(2+) as cofactor.

The catalysed reaction is a tRNA precursor + 2 CTP + ATP = a tRNA with a 3' CCA end + 3 diphosphate. It catalyses the reaction a tRNA with a 3' CCA end + 2 CTP + ATP = a tRNA with a 3' CCACCA end + 3 diphosphate. In terms of biological role, catalyzes the addition and repair of the essential 3'-terminal CCA sequence in tRNAs without using a nucleic acid template. Adds these three nucleotides in the order of C, C, and A to the tRNA nucleotide-73, using CTP and ATP as substrates and producing inorganic pyrophosphate. tRNA 3'-terminal CCA addition is required both for tRNA processing and repair. Also involved in tRNA surveillance by mediating tandem CCA addition to generate a CCACCA at the 3' terminus of unstable tRNAs. While stable tRNAs receive only 3'-terminal CCA, unstable tRNAs are marked with CCACCA and rapidly degraded. This chain is CCA-adding enzyme, found in Buchnera aphidicola subsp. Schizaphis graminum (strain Sg).